The sequence spans 347 residues: Geranylgeranyl pyrophosphate synthase 7, chloroplastic (347 aa).

A chloroplast-targeting transit peptide spans M1 to L39. Isopentenyl diphosphate contacts are provided by K95, R98, and H127. Mg(2+) is bound by residues D134 and D140. Position 145 (R145) interacts with dimethylallyl diphosphate. R146 serves as a coordination point for isopentenyl diphosphate. Positions 232, 233, 270, 287, and 297 each coordinate dimethylallyl diphosphate.

The protein belongs to the FPP/GGPP synthase family. In terms of assembly, monomer. The cofactor is Mg(2+).

The protein resides in the plastid. The protein localises to the chloroplast. It carries out the reaction isopentenyl diphosphate + dimethylallyl diphosphate = (2E)-geranyl diphosphate + diphosphate. The enzyme catalyses isopentenyl diphosphate + (2E)-geranyl diphosphate = (2E,6E)-farnesyl diphosphate + diphosphate. The catalysed reaction is isopentenyl diphosphate + (2E,6E)-farnesyl diphosphate = (2E,6E,10E)-geranylgeranyl diphosphate + diphosphate. It functions in the pathway isoprenoid biosynthesis; farnesyl diphosphate biosynthesis; farnesyl diphosphate from geranyl diphosphate and isopentenyl diphosphate: step 1/1. The protein operates within isoprenoid biosynthesis; geranyl diphosphate biosynthesis; geranyl diphosphate from dimethylallyl diphosphate and isopentenyl diphosphate: step 1/1. It participates in isoprenoid biosynthesis; geranylgeranyl diphosphate biosynthesis; geranylgeranyl diphosphate from farnesyl diphosphate and isopentenyl diphosphate: step 1/1. In terms of biological role, catalyzes the trans-addition of the three molecules of IPP onto DMAPP to form geranylgeranyl pyrophosphate. This Arabidopsis thaliana (Mouse-ear cress) protein is Geranylgeranyl pyrophosphate synthase 7, chloroplastic.